The sequence spans 150 residues: Small ribosomal subunit protein uS13 (150 aa).

Belongs to the universal ribosomal protein uS13 family. As to quaternary structure, part of the 30S ribosomal subunit. Forms a loose heterodimer with protein S19. Forms two bridges to the 50S subunit in the 70S ribosome.

In terms of biological role, located at the top of the head of the 30S subunit, it contacts several helices of the 16S rRNA. In the 70S ribosome it contacts the 23S rRNA (bridge B1a) and protein L5 of the 50S subunit (bridge B1b), connecting the 2 subunits; these bridges are implicated in subunit movement. This is Small ribosomal subunit protein uS13 from Methanocorpusculum labreanum (strain ATCC 43576 / DSM 4855 / Z).